A 93-amino-acid polypeptide reads, in one-letter code: Mammaglobin-A (93 aa).

Residues 1 to 18 (MKLLMVLMLAALSQHCYA) form the signal peptide. Residues asparagine 53 and asparagine 68 are each glycosylated (N-linked (GlcNAc...) asparagine).

Belongs to the secretoglobin family. Lipophilin subfamily. Mammary gland specific. Over-expressed in breast cancer.

It localises to the secreted. This Homo sapiens (Human) protein is Mammaglobin-A (SCGB2A2).